The chain runs to 365 residues: 2-aminoethylphosphonate--pyruvate transaminase (365 aa).

Lysine 194 is subject to N6-(pyridoxal phosphate)lysine.

Belongs to the class-V pyridoxal-phosphate-dependent aminotransferase family. PhnW subfamily. As to quaternary structure, homodimer. The cofactor is pyridoxal 5'-phosphate.

The catalysed reaction is (2-aminoethyl)phosphonate + pyruvate = phosphonoacetaldehyde + L-alanine. Its function is as follows. Involved in phosphonate degradation. This is 2-aminoethylphosphonate--pyruvate transaminase from Bacillus thuringiensis (strain Al Hakam).